The sequence spans 468 residues: Chromosomal replication initiator protein DnaA (468 aa).

A domain I, interacts with DnaA modulators region spans residues 1 to 84; sequence MSSSLWLQCL…RFEVGSKPIS (84 aa). The tract at residues 84-131 is domain II; the sequence is SAPPRPQRTAADVAAATSAPAQMQARQSLHKPWESRGPEPVDDLNHRS. A disordered region spans residues 112–132; the sequence is LHKPWESRGPEPVDDLNHRSN. The span at 114–129 shows a compositional bias: basic and acidic residues; it reads KPWESRGPEPVDDLNH. Residues 132–348 are domain III, AAA+ region; it reads NVNPKHKFTN…GALNRVVANA (217 aa). ATP is bound by residues G176, G178, K179, and T180. The domain IV, binds dsDNA stretch occupies residues 349–468; the sequence is NFTGRAITID…YSNLIRTLSS (120 aa).

Belongs to the DnaA family. As to quaternary structure, oligomerizes as a right-handed, spiral filament on DNA at oriC.

It localises to the cytoplasm. Functionally, plays an essential role in the initiation and regulation of chromosomal replication. ATP-DnaA binds to the origin of replication (oriC) to initiate formation of the DNA replication initiation complex once per cell cycle. Binds the DnaA box (a 9 base pair repeat at the origin) and separates the double-stranded (ds)DNA. Forms a right-handed helical filament on oriC DNA; dsDNA binds to the exterior of the filament while single-stranded (ss)DNA is stabiized in the filament's interior. The ATP-DnaA-oriC complex binds and stabilizes one strand of the AT-rich DNA unwinding element (DUE), permitting loading of DNA polymerase. After initiation quickly degrades to an ADP-DnaA complex that is not apt for DNA replication. Binds acidic phospholipids. The chain is Chromosomal replication initiator protein DnaA from Aliivibrio salmonicida (strain LFI1238) (Vibrio salmonicida (strain LFI1238)).